The following is a 357-amino-acid chain: Ribosomal large subunit pseudouridine synthase B (357 aa).

A compositionally biased stretch (polar residues) spans 1–12; that stretch reads MKPSQKQTQRQP. Residues 1–76 are disordered; sequence MKPSQKQTQR…ASNQPKAEGE (76 aa). Over residues 14-32 the composition is skewed to basic and acidic residues; that stretch reads FSKDSAKKRDFSAKNDRRS. Over residues 41-54 the composition is skewed to polar residues; sequence TANTKKSAVNSDNK. Residues 76–148 form the S4 RNA-binding domain; it reads EKLQKVLARA…ICRVLMYYKP (73 aa). Asp-183 (nucleophile) is an active-site residue.

Belongs to the pseudouridine synthase RsuA family.

The enzyme catalyses uridine(2605) in 23S rRNA = pseudouridine(2605) in 23S rRNA. Functionally, responsible for synthesis of pseudouridine from uracil-2605 in 23S ribosomal RNA. This chain is Ribosomal large subunit pseudouridine synthase B (rluB), found in Haemophilus influenzae (strain ATCC 51907 / DSM 11121 / KW20 / Rd).